A 226-amino-acid chain; its full sequence is ATP synthase F(0) complex subunit a (226 aa).

Helical transmembrane passes span 9–29 (FITPMMLGLPLVTLIILFPSL), 68–88 (WTLMLMSLILFIGSTNLLGLL), 97–117 (QLSMNLGMAIPLWAGAVITGF), 138–158 (IPMLVIIETISLFIQPMALAV), and 184–204 (ISPTTALITFIILILLTILEF).

Belongs to the ATPase A chain family. Component of the ATP synthase complex composed at least of ATP5F1A/subunit alpha, ATP5F1B/subunit beta, ATP5MC1/subunit c (homooctomer), MT-ATP6/subunit a, MT-ATP8/subunit 8, ATP5ME/subunit e, ATP5MF/subunit f, ATP5MG/subunit g, ATP5MK/subunit k, ATP5MJ/subunit j, ATP5F1C/subunit gamma, ATP5F1D/subunit delta, ATP5F1E/subunit epsilon, ATP5PF/subunit F6, ATP5PB/subunit b, ATP5PD/subunit d, ATP5PO/subunit OSCP. ATP synthase complex consists of a soluble F(1) head domain (subunits alpha(3) and beta(3)) - the catalytic core - and a membrane F(0) domain - the membrane proton channel (subunits c, a, 8, e, f, g, k and j). These two domains are linked by a central stalk (subunits gamma, delta, and epsilon) rotating inside the F1 region and a stationary peripheral stalk (subunits F6, b, d, and OSCP). Interacts with DNAJC30; interaction is direct.

The protein localises to the mitochondrion inner membrane. The catalysed reaction is H(+)(in) = H(+)(out). In terms of biological role, subunit a, of the mitochondrial membrane ATP synthase complex (F(1)F(0) ATP synthase or Complex V) that produces ATP from ADP in the presence of a proton gradient across the membrane which is generated by electron transport complexes of the respiratory chain. ATP synthase complex consist of a soluble F(1) head domain - the catalytic core - and a membrane F(1) domain - the membrane proton channel. These two domains are linked by a central stalk rotating inside the F(1) region and a stationary peripheral stalk. During catalysis, ATP synthesis in the catalytic domain of F(1) is coupled via a rotary mechanism of the central stalk subunits to proton translocation. With the subunit c (ATP5MC1), forms the proton-conducting channel in the F(0) domain, that contains two crucial half-channels (inlet and outlet) that facilitate proton movement from the mitochondrial intermembrane space (IMS) into the matrix. Protons are taken up via the inlet half-channel and released through the outlet half-channel, following a Grotthuss mechanism. This is ATP synthase F(0) complex subunit a from Capra hircus (Goat).